Consider the following 100-residue polypeptide: Small ribosomal subunit protein uS14c (100 aa).

The protein belongs to the universal ribosomal protein uS14 family. Part of the 30S ribosomal subunit.

The protein localises to the plastid. It localises to the chloroplast. Functionally, binds 16S rRNA, required for the assembly of 30S particles. This Phalaenopsis aphrodite subsp. formosana (Moth orchid) protein is Small ribosomal subunit protein uS14c.